The following is a 966-amino-acid chain: Glycine dehydrogenase (decarboxylating) (966 aa).

An N6-(pyridoxal phosphate)lysine modification is found at K713.

The protein belongs to the GcvP family. As to quaternary structure, the glycine cleavage system is composed of four proteins: P, T, L and H. Pyridoxal 5'-phosphate serves as cofactor.

It catalyses the reaction N(6)-[(R)-lipoyl]-L-lysyl-[glycine-cleavage complex H protein] + glycine + H(+) = N(6)-[(R)-S(8)-aminomethyldihydrolipoyl]-L-lysyl-[glycine-cleavage complex H protein] + CO2. The glycine cleavage system catalyzes the degradation of glycine. The P protein binds the alpha-amino group of glycine through its pyridoxal phosphate cofactor; CO(2) is released and the remaining methylamine moiety is then transferred to the lipoamide cofactor of the H protein. The protein is Glycine dehydrogenase (decarboxylating) of Psychromonas ingrahamii (strain DSM 17664 / CCUG 51855 / 37).